Reading from the N-terminus, the 513-residue chain is Ferulic acid decarboxylase 1 (513 aa).

Residues Asn-174, His-197, and Glu-240 each contribute to the Mn(2+) site. Prenylated FMN-binding positions include 174–179 (NWSIAR), 196–197 (QH), and Glu-240. Glu-289 acts as the Proton donor in catalysis. A prenylated FMN-binding site is contributed by Lys-405.

Belongs to the UbiD family. UbiD-like/FDC subfamily. In terms of assembly, homodimer. May form higher order oligomers. It depends on Mn(2+) as a cofactor. The cofactor is prenylated FMN.

It is found in the cytoplasm. The enzyme catalyses (E)-4-coumarate + H(+) = 4-vinylphenol + CO2. The catalysed reaction is (E)-cinnamate + H(+) = styrene + CO2. It carries out the reaction (E)-ferulate + H(+) = 2-methoxy-4-vinylphenol + CO2. In terms of biological role, catalyzes the reversible decarboxylation of aromatic carboxylic acids like ferulic acid, p-coumaric acid or cinnamic acid, producing the corresponding vinyl derivatives 4-vinylphenol, 4-vinylguaiacol, and styrene, respectively, which play the role of aroma metabolites. In Candida dubliniensis (strain CD36 / ATCC MYA-646 / CBS 7987 / NCPF 3949 / NRRL Y-17841) (Yeast), this protein is Ferulic acid decarboxylase 1.